The sequence spans 145 residues: Neuromedin-S (145 aa).

An N-terminal signal peptide occupies residues 1–27 (MRSEKHLLPLPLLLAICCLGTLHLSSG). 2 propeptides span residues 28–89 (FPQS…HEIY) and 92–117 (FLFQFSRAKDPSLKIGESQIATAEYT). Asn136 bears the Asparagine amide mark. The propeptide occupies 140–145 (VSINEH).

The protein belongs to the NmU family. In terms of tissue distribution, expressed by the skin glands.

The protein resides in the secreted. Functionally, stimulates uterine smooth muscle contraction (EC(50)=1.6 nM). Synthetic peptide NmS-17 induces calcium mobilization in CHO cells transfected with either human FM-3/GPR66 (EC(50)=0.085 nM) or FM-4/TGR-1 (EC(50)=0.231 nM) NmU/NmS receptors. The polypeptide is Neuromedin-S (nms) (Bombina maxima (Giant fire-bellied toad)).